We begin with the raw amino-acid sequence, 1703 residues long: Arf-GAP with Rho-GAP domain, ANK repeat and PH domain-containing protein 2 (1703 aa).

An SAM domain is found at 6–70 (EVNADIRDFL…LKQLQMIFSK (65 aa)). The residue at position 77 (Y77) is a Phosphotyrosine. Disordered stretches follow at residues 84–132 (KNGS…LSEG), 191–232 (EEHT…NGTN), and 286–319 (PVPE…LTLK). 3 stretches are compositionally biased toward polar residues: residues 85-103 (NGST…STHT), 123-132 (MVTTSTLSEG), and 197-214 (GNLT…NTEC). A compositionally biased stretch (low complexity) spans 222 to 232 (TSGTHSGNGTN). The segment covering 308–319 (NTTSAGKSLTLK) has biased composition (polar residues). PH domains follow at residues 480 to 572 (AKEK…SALK) and 585 to 677 (APEK…QSIA). In terms of domain architecture, Arf-GAP spans 674 to 809 (QSIAETLSDY…TLLASLTKEE (136 aa)). Residues 698-721 (CADCKAPDPDWASINLCVVICKKC) form a C4-type zinc finger. 2 PH domains span residues 899–1001 (QTAA…KRFV) and 1012–1110 (DYDL…KAAG). Residues 1114–1295 (NALQDQQLCK…DLINNYVEIF (182 aa)) form the Rho-GAP domain. Positions 1324-1418 (GDLLIEVFVE…AYLVVKRFLT (95 aa)) constitute a Ras-associating domain. A PH 5 domain is found at 1428–1531 (KSIKEGILKL…WMASIFIAQH (104 aa)). The residue at position 1627 (S1627) is a Phosphoserine. Disordered regions lie at residues 1633–1670 (DTEA…DPKL) and 1684–1703 (RSRP…KEVK). Composition is skewed to basic and acidic residues over residues 1653-1670 (KKTE…DPKL) and 1688-1703 (LHKE…KEVK).

The protein localises to the cytoplasm. Phosphatidylinositol 3,4,5-trisphosphate-dependent GTPase-activating protein that modulates actin cytoskeleton remodeling by regulating ARF and RHO family members. Is activated by phosphatidylinositol 3,4,5-trisphosphate (PtdIns(3,4,5)P3) binding. Can be activated by phosphatidylinositol 3,4-bisphosphate (PtdIns(3,4,5)P2) binding, albeit with lower efficiency. This is Arf-GAP with Rho-GAP domain, ANK repeat and PH domain-containing protein 2 (Arap2) from Mus musculus (Mouse).